Consider the following 477-residue polypeptide: UDP-N-acetylmuramate--L-alanine ligase (477 aa).

122-128 provides a ligand contact to ATP; sequence GTHGKTT.

This sequence belongs to the MurCDEF family.

The protein resides in the cytoplasm. The catalysed reaction is UDP-N-acetyl-alpha-D-muramate + L-alanine + ATP = UDP-N-acetyl-alpha-D-muramoyl-L-alanine + ADP + phosphate + H(+). Its pathway is cell wall biogenesis; peptidoglycan biosynthesis. Functionally, cell wall formation. This Xanthomonas oryzae pv. oryzae (strain MAFF 311018) protein is UDP-N-acetylmuramate--L-alanine ligase.